Here is a 359-residue protein sequence, read N- to C-terminus: UDP-3-O-acylglucosamine N-acyltransferase (359 aa).

His256 functions as the Proton acceptor in the catalytic mechanism.

The protein belongs to the transferase hexapeptide repeat family. LpxD subfamily. In terms of assembly, homotrimer.

The enzyme catalyses a UDP-3-O-[(3R)-3-hydroxyacyl]-alpha-D-glucosamine + a (3R)-hydroxyacyl-[ACP] = a UDP-2-N,3-O-bis[(3R)-3-hydroxyacyl]-alpha-D-glucosamine + holo-[ACP] + H(+). Its pathway is bacterial outer membrane biogenesis; LPS lipid A biosynthesis. Catalyzes the N-acylation of UDP-3-O-acylglucosamine using 3-hydroxyacyl-ACP as the acyl donor. Is involved in the biosynthesis of lipid A, a phosphorylated glycolipid that anchors the lipopolysaccharide to the outer membrane of the cell. The protein is UDP-3-O-acylglucosamine N-acyltransferase of Rhodopseudomonas palustris (strain HaA2).